The chain runs to 241 residues: 1-(5-phosphoribosyl)-5-[(5-phosphoribosylamino)methylideneamino] imidazole-4-carboxamide isomerase (241 aa).

Aspartate 8 (proton acceptor) is an active-site residue. Aspartate 130 (proton donor) is an active-site residue.

The protein belongs to the HisA/HisF family.

It is found in the cytoplasm. It catalyses the reaction 1-(5-phospho-beta-D-ribosyl)-5-[(5-phospho-beta-D-ribosylamino)methylideneamino]imidazole-4-carboxamide = 5-[(5-phospho-1-deoxy-D-ribulos-1-ylimino)methylamino]-1-(5-phospho-beta-D-ribosyl)imidazole-4-carboxamide. It functions in the pathway amino-acid biosynthesis; L-histidine biosynthesis; L-histidine from 5-phospho-alpha-D-ribose 1-diphosphate: step 4/9. The sequence is that of 1-(5-phosphoribosyl)-5-[(5-phosphoribosylamino)methylideneamino] imidazole-4-carboxamide isomerase from Francisella philomiragia subsp. philomiragia (strain ATCC 25017 / CCUG 19701 / FSC 153 / O#319-036).